Here is a 481-residue protein sequence, read N- to C-terminus: Glutamyl-tRNA(Gln) amidotransferase subunit A (481 aa).

Residues K74 and S149 each act as charge relay system in the active site. S173 (acyl-ester intermediate) is an active-site residue.

The protein belongs to the amidase family. GatA subfamily. As to quaternary structure, heterotrimer of A, B and C subunits.

The catalysed reaction is L-glutamyl-tRNA(Gln) + L-glutamine + ATP + H2O = L-glutaminyl-tRNA(Gln) + L-glutamate + ADP + phosphate + H(+). In terms of biological role, allows the formation of correctly charged Gln-tRNA(Gln) through the transamidation of misacylated Glu-tRNA(Gln) in organisms which lack glutaminyl-tRNA synthetase. The reaction takes place in the presence of glutamine and ATP through an activated gamma-phospho-Glu-tRNA(Gln). The protein is Glutamyl-tRNA(Gln) amidotransferase subunit A of Francisella tularensis subsp. tularensis (strain FSC 198).